The following is a 56-amino-acid chain: Large ribosomal subunit protein bL33A (56 aa).

Belongs to the bacterial ribosomal protein bL33 family.

This chain is Large ribosomal subunit protein bL33A, found in Sorangium cellulosum (strain So ce56) (Polyangium cellulosum (strain So ce56)).